Consider the following 237-residue polypeptide: E3 ubiquitin-protein ligase RNF166 (237 aa).

The segment at 33 to 73 (CPICLEVYHRPVAIGSCGHTFCGECLQPCLQVPSPLCPLCR) adopts an RING-type zinc-finger fold. Zn(2+) is bound by residues Cys-98, Cys-101, His-113, and Cys-117. A C2HC RNF-type zinc finger spans residues 98–117 (CRGCNKKVTLAKMRAHISSC). The 17-residue stretch at 221-237 (DEEAAFQAALALSLSEN) folds into the UIM domain.

It is found in the cytoplasm. The enzyme catalyses S-ubiquitinyl-[E2 ubiquitin-conjugating enzyme]-L-cysteine + [acceptor protein]-L-lysine = [E2 ubiquitin-conjugating enzyme]-L-cysteine + N(6)-ubiquitinyl-[acceptor protein]-L-lysine.. Its pathway is protein modification; protein ubiquitination. Functionally, E3 ubiquitin-protein ligase that promotes the ubiquitination of different substrates. In turn, participates in different biological processes including interferon production or autophagy. Plays a role in the activation of RNA virus-induced interferon-beta production by promoting the ubiquitination of TRAF3 and TRAF6. Also plays a role in the early recruitment of autophagy adapters to bacteria. Mediates 'Lys-29' and 'Lys-33'-linked ubiquitination of SQSTM1 leading to xenophagic targeting of bacteria and inhibition of their replication. The sequence is that of E3 ubiquitin-protein ligase RNF166 (Rnf166) from Mus musculus (Mouse).